Here is a 358-residue protein sequence, read N- to C-terminus: Peptide chain release factor 1 (358 aa).

Gln237 is subject to N5-methylglutamine.

It belongs to the prokaryotic/mitochondrial release factor family. Post-translationally, methylated by PrmC. Methylation increases the termination efficiency of RF1.

Its subcellular location is the cytoplasm. Its function is as follows. Peptide chain release factor 1 directs the termination of translation in response to the peptide chain termination codons UAG and UAA. This is Peptide chain release factor 1 from Streptomyces griseus subsp. griseus (strain JCM 4626 / CBS 651.72 / NBRC 13350 / KCC S-0626 / ISP 5235).